Consider the following 247-residue polypeptide: Uridylate kinase (247 aa).

15 to 18 (KLSG) contacts ATP. The segment at 23-28 (GDEGFG) is involved in allosteric activation by GTP. Position 57 (Gly-57) interacts with UMP. Gly-58 and Arg-62 together coordinate ATP. UMP-binding positions include Asp-77 and 138-145 (TGNPFFTT). Thr-165, Tyr-171, and Asp-174 together coordinate ATP.

Belongs to the UMP kinase family. As to quaternary structure, homohexamer.

It localises to the cytoplasm. It carries out the reaction UMP + ATP = UDP + ADP. It participates in pyrimidine metabolism; CTP biosynthesis via de novo pathway; UDP from UMP (UMPK route): step 1/1. With respect to regulation, allosterically activated by GTP. Inhibited by UTP. Catalyzes the reversible phosphorylation of UMP to UDP. In Saccharophagus degradans (strain 2-40 / ATCC 43961 / DSM 17024), this protein is Uridylate kinase.